The sequence spans 482 residues: ATP synthase subunit beta (482 aa).

162–169 (GGAGVGKT) serves as a coordination point for ATP.

In terms of assembly, F-type ATPases have 2 components, CF(1) - the catalytic core - and CF(0) - the membrane proton channel. CF(1) has five subunits: alpha(3), beta(3), gamma(1), delta(1), epsilon(1). CF(0) has four main subunits: a(1), b(1), b'(1) and c(9-12).

The protein localises to the cellular thylakoid membrane. It catalyses the reaction ATP + H2O + 4 H(+)(in) = ADP + phosphate + 5 H(+)(out). With respect to regulation, inhibited by dicyclohexylcarbodiimide. Its function is as follows. Produces ATP from ADP in the presence of a proton gradient across the membrane. The catalytic sites are hosted primarily by the beta subunits. The complex from the organism is particularly stable to disruption and remains functional after 6 hrs at 55 degrees Celsius. The chain is ATP synthase subunit beta from Thermosynechococcus vestitus (strain NIES-2133 / IAM M-273 / BP-1).